The following is a 256-amino-acid chain: Small ribosomal subunit protein uS2 (256 aa).

This sequence belongs to the universal ribosomal protein uS2 family.

The chain is Small ribosomal subunit protein uS2 from Brucella abortus (strain S19).